The chain runs to 191 residues: Ribonuclease MC (191 aa).

Glutamine 9 lines the RNA pocket. A disulfide bridge connects residues cysteine 15 and cysteine 23. RNA is bound by residues histidine 34, 72 to 73 (NV), arginine 75, phenylalanine 81, 84 to 85 (HE), and 88 to 89 (KH). The Proton donor role is filled by histidine 34. Disulfide bonds link cysteine 48–cysteine 92, cysteine 152–cysteine 185, and cysteine 169–cysteine 180. Glutamate 85 is an active-site residue. Residue histidine 89 is the Proton acceptor of the active site.

The protein belongs to the RNase T2 family.

It catalyses the reaction a ribonucleotidyl-ribonucleotide-RNA + H2O = a 3'-end 3'-phospho-ribonucleotide-RNA + a 5'-end dephospho-ribonucleoside-RNA + H(+). Ribonuclease cleaving preferentially the 5'-side of uridine. This chain is Ribonuclease MC, found in Momordica charantia (Bitter gourd).